Reading from the N-terminus, the 338-residue chain is 4-hydroxy-2-oxovalerate aldolase (338 aa).

A Pyruvate carboxyltransferase domain is found at 4-254 (PRLTDTTLRD…NPGLDVLALM (251 aa)). 12-13 (RD) is a substrate binding site. A Mn(2+)-binding site is contributed by Asp-13. His-16 functions as the Proton acceptor in the catalytic mechanism. Ser-166 and His-193 together coordinate substrate. Positions 193 and 195 each coordinate Mn(2+). Tyr-284 serves as a coordination point for substrate.

The protein belongs to the 4-hydroxy-2-oxovalerate aldolase family.

The enzyme catalyses (S)-4-hydroxy-2-oxopentanoate = acetaldehyde + pyruvate. The sequence is that of 4-hydroxy-2-oxovalerate aldolase from Roseiflexus sp. (strain RS-1).